We begin with the raw amino-acid sequence, 228 residues long: 2,3-bisphosphoglycerate-dependent phosphoglycerate mutase (228 aa).

Residues 8–15 (RHGQSEWN), 21–22 (TG), R60, 87–90 (ERHY), K98, 114–115 (RR), and 183–184 (GN) contribute to the substrate site. H9 serves as the catalytic Tele-phosphohistidine intermediate. The active-site Proton donor/acceptor is the E87.

The protein belongs to the phosphoglycerate mutase family. BPG-dependent PGAM subfamily.

It carries out the reaction (2R)-2-phosphoglycerate = (2R)-3-phosphoglycerate. It participates in carbohydrate degradation; glycolysis; pyruvate from D-glyceraldehyde 3-phosphate: step 3/5. Catalyzes the interconversion of 2-phosphoglycerate and 3-phosphoglycerate. This Staphylococcus aureus (strain Mu3 / ATCC 700698) protein is 2,3-bisphosphoglycerate-dependent phosphoglycerate mutase.